Consider the following 90-residue polypeptide: Albumin (90 aa).

S5 carries the post-translational modification Phosphoserine. The Ca(2+) site is built by E6 and D13. The Albumin domain maps to 25 to 90 (LLRHLVDEPQ…LVASTQAALA (66 aa)). At S61 the chain carries Phosphoserine. A phosphothreonine mark is found at T62 and T64. The residue at position 80 (K80) is an N6-methyllysine.

The protein belongs to the ALB/AFP/VDB family. In terms of assembly, interacts with FCGRT; this interaction regulates ALB homeostasis. Interacts with TASOR. In plasma, occurs in a covalently-linked complex with chromophore-bound alpha-1-microglobulin; this interaction does not prevent fatty acid binding to ALB. Plasma.

It is found in the secreted. Its function is as follows. Binds water, Ca(2+), Na(+), K(+), fatty acids, hormones, bilirubin and drugs. Its main function is the regulation of the colloidal osmotic pressure of blood. Major zinc transporter in plasma, typically binds about 80% of all plasma zinc. Major calcium and magnesium transporter in plasma, binds approximately 45% of circulating calcium and magnesium in plasma. Potentially has more than two calcium-binding sites and might additionally bind calcium in a non-specific manner. The shared binding site between zinc and calcium suggests a crosstalk between zinc and calcium transport in the blood. The rank order of affinity is zinc &gt; calcium &gt; magnesium. Binds to the bacterial siderophore enterobactin and inhibits enterobactin-mediated iron uptake of E.coli from ferric transferrin, and may thereby limit the utilization of iron and growth of enteric bacteria such as E.coli. Does not prevent iron uptake by the bacterial siderophore aerobactin. The polypeptide is Albumin (Capra hircus (Goat)).